Here is a 372-residue protein sequence, read N- to C-terminus: Chorismate synthase (372 aa).

The NADP(+) site is built by arginine 48 and arginine 54. Residues 125 to 127 (RSS), 238 to 239 (NA), glycine 278, 293 to 297 (KPTSS), and arginine 319 contribute to the FMN site.

It belongs to the chorismate synthase family. Homotetramer. FMNH2 serves as cofactor.

It carries out the reaction 5-O-(1-carboxyvinyl)-3-phosphoshikimate = chorismate + phosphate. It functions in the pathway metabolic intermediate biosynthesis; chorismate biosynthesis; chorismate from D-erythrose 4-phosphate and phosphoenolpyruvate: step 7/7. In terms of biological role, catalyzes the anti-1,4-elimination of the C-3 phosphate and the C-6 proR hydrogen from 5-enolpyruvylshikimate-3-phosphate (EPSP) to yield chorismate, which is the branch point compound that serves as the starting substrate for the three terminal pathways of aromatic amino acid biosynthesis. This reaction introduces a second double bond into the aromatic ring system. In Xylella fastidiosa (strain M23), this protein is Chorismate synthase.